A 346-amino-acid chain; its full sequence is Putative agmatine deiminase (346 aa).

The active-site Amidino-cysteine intermediate is Cys-333.

This sequence belongs to the agmatine deiminase family.

It catalyses the reaction agmatine + H2O = N-carbamoylputrescine + NH4(+). The protein is Putative agmatine deiminase of Legionella pneumophila (strain Paris).